Consider the following 334-residue polypeptide: Methylthioribose-1-phosphate isomerase (334 aa).

Substrate-binding positions include 44–46 (RGA), Arg-87, and Gln-192. The Proton donor role is filled by Asp-233. 243-244 (NK) serves as a coordination point for substrate.

This sequence belongs to the eIF-2B alpha/beta/delta subunits family. MtnA subfamily.

The enzyme catalyses 5-(methylsulfanyl)-alpha-D-ribose 1-phosphate = 5-(methylsulfanyl)-D-ribulose 1-phosphate. Its pathway is amino-acid biosynthesis; L-methionine biosynthesis via salvage pathway; L-methionine from S-methyl-5-thio-alpha-D-ribose 1-phosphate: step 1/6. Functionally, catalyzes the interconversion of methylthioribose-1-phosphate (MTR-1-P) into methylthioribulose-1-phosphate (MTRu-1-P). In Dehalococcoides mccartyi (strain ATCC BAA-2266 / KCTC 15142 / 195) (Dehalococcoides ethenogenes (strain 195)), this protein is Methylthioribose-1-phosphate isomerase.